A 184-amino-acid chain; its full sequence is Translocon-associated protein subunit beta (184 aa).

Residues 1–20 (MNFKTVISLFLVLFVSFVYC) form the signal peptide. At 21–147 (ENGAELLFHK…SQADYEKRTS (127 aa)) the chain is on the lumenal side. N94 carries N-linked (GlcNAc...) asparagine glycosylation. Residues 148–168 (LLIKEWITFFVLCAGAIALPY) traverse the membrane as a helical segment. Residues 169–184 (SISTYYKKNYENGIKK) lie on the Cytoplasmic side of the membrane.

The protein belongs to the TRAP-beta family. Heterotrimer of TRAP-alpha, TRAP-beta and TRAP-gamma.

It is found in the endoplasmic reticulum membrane. In terms of biological role, TRAP proteins are part of a complex whose function is to bind calcium to the ER membrane and thereby regulate the retention of ER resident proteins. This is Translocon-associated protein subunit beta (ssr2) from Dictyostelium discoideum (Social amoeba).